A 256-amino-acid polypeptide reads, in one-letter code: Thiazole synthase (256 aa).

Lys96 (schiff-base intermediate with DXP) is an active-site residue. 1-deoxy-D-xylulose 5-phosphate contacts are provided by residues Gly157, 183 to 184 (AG), and 205 to 206 (NT).

This sequence belongs to the ThiG family. Homotetramer. Forms heterodimers with either ThiH or ThiS.

The protein localises to the cytoplasm. The catalysed reaction is [ThiS sulfur-carrier protein]-C-terminal-Gly-aminoethanethioate + 2-iminoacetate + 1-deoxy-D-xylulose 5-phosphate = [ThiS sulfur-carrier protein]-C-terminal Gly-Gly + 2-[(2R,5Z)-2-carboxy-4-methylthiazol-5(2H)-ylidene]ethyl phosphate + 2 H2O + H(+). Its pathway is cofactor biosynthesis; thiamine diphosphate biosynthesis. Functionally, catalyzes the rearrangement of 1-deoxy-D-xylulose 5-phosphate (DXP) to produce the thiazole phosphate moiety of thiamine. Sulfur is provided by the thiocarboxylate moiety of the carrier protein ThiS. In vitro, sulfur can be provided by H(2)S. The protein is Thiazole synthase of Bacillus anthracis.